Reading from the N-terminus, the 458-residue chain is Photosystem II CP43 reaction center protein (458 aa).

5 helical membrane passes run 54–78, 119–140, 163–185, 240–260, and 276–297; these read LFEV…PHLA, LRGP…KDKN, KAMF…RVIT, RPFN…LSYS, and WFNN…ASQA. Glutamate 352 contacts [CaMn4O5] cluster. The chain crosses the membrane as a helical span at residues 432–456; sequence RARAAAAGFEKGIDRKTEPVLSMSD.

This sequence belongs to the PsbB/PsbC family. PsbC subfamily. In terms of assembly, PSII is composed of 1 copy each of membrane proteins PsbA, PsbB, PsbC, PsbD, PsbE, PsbF, PsbH, PsbI, PsbJ, PsbK, PsbL, PsbM, PsbT, PsbX, PsbY, PsbZ, Psb30/Ycf12, peripheral proteins PsbO, CyanoQ (PsbQ), PsbU, PsbV and a large number of cofactors. It forms dimeric complexes. Binds multiple chlorophylls and provides some of the ligands for the Ca-4Mn-5O cluster of the oxygen-evolving complex. It may also provide a ligand for a Cl- that is required for oxygen evolution. PSII binds additional chlorophylls, carotenoids and specific lipids. is required as a cofactor.

The protein localises to the cellular thylakoid membrane. Functionally, one of the components of the core complex of photosystem II (PSII). It binds chlorophyll and helps catalyze the primary light-induced photochemical processes of PSII. PSII is a light-driven water:plastoquinone oxidoreductase, using light energy to abstract electrons from H(2)O, generating O(2) and a proton gradient subsequently used for ATP formation. This is Photosystem II CP43 reaction center protein from Prochlorothrix hollandica.